Consider the following 291-residue polypeptide: Transmembrane protein 41B (291 aa).

The disordered stretch occupies residues 1–38 (MAKGRVAERSQMGADHTTPVGDGAAGTRGPAAPGSRDY). Thr-18 is modified (phosphothreonine). Residues 21–34 (GDGAAGTRGPAAPG) show a composition bias toward low complexity. Position 35 is a phosphoserine (Ser-35). 6 consecutive transmembrane segments (helical) span residues 52–72 (MSLL…FLVY), 109–129 (FYVQ…TFAI), 147–169 (LALF…LSYL), 197–217 (LINY…FINI), 225–245 (PLKV…FVAI), and 262–282 (SWNS…PAIF). A VTT domain; required for its function in autophagy region spans residues 140 to 251 (GFLYPFPLAL…FVAIKAGTTL (112 aa)).

Belongs to the TMEM41 family. Interacts with VMP1. Interacts with COPA, COPB1, VDAC1 and ERLIN2. Interacts with ATG2A. Interacts with SURF4.

Its subcellular location is the endoplasmic reticulum membrane. The protein resides in the endomembrane system. The enzyme catalyses a 1,2-diacyl-sn-glycero-3-phospho-L-serine(in) = a 1,2-diacyl-sn-glycero-3-phospho-L-serine(out). The catalysed reaction is cholesterol(in) = cholesterol(out). It carries out the reaction a 1,2-diacyl-sn-glycero-3-phosphocholine(in) = a 1,2-diacyl-sn-glycero-3-phosphocholine(out). It catalyses the reaction a 1,2-diacyl-sn-glycero-3-phosphoethanolamine(in) = a 1,2-diacyl-sn-glycero-3-phosphoethanolamine(out). Phospholipid scramblase involved in lipid homeostasis and membrane dynamics processes. Has phospholipid scramblase activity toward cholesterol and phosphatidylserine, as well as phosphatidylethanolamine and phosphatidylcholine. Required for autophagosome formation: participates in early stages of autophagosome biogenesis at the endoplasmic reticulum (ER) membrane by reequilibrating the leaflets of the ER as lipids are extracted by ATG2 (ATG2A or ATG2B) to mediate autophagosome assembly. In addition to autophagy, involved in other processes in which phospholipid scramblase activity is required. Required for normal motor neuron development. In Pongo abelii (Sumatran orangutan), this protein is Transmembrane protein 41B.